Consider the following 310-residue polypeptide: Aspartate carbamoyltransferase catalytic subunit (310 aa).

Carbamoyl phosphate contacts are provided by arginine 57 and threonine 58. Lysine 86 contacts L-aspartate. Carbamoyl phosphate-binding residues include arginine 107, histidine 135, and glutamine 138. Residues arginine 168 and arginine 229 each coordinate L-aspartate. Carbamoyl phosphate contacts are provided by leucine 268 and proline 269.

It belongs to the aspartate/ornithine carbamoyltransferase superfamily. ATCase family. As to quaternary structure, heterooligomer of catalytic and regulatory chains.

The catalysed reaction is carbamoyl phosphate + L-aspartate = N-carbamoyl-L-aspartate + phosphate + H(+). It participates in pyrimidine metabolism; UMP biosynthesis via de novo pathway; (S)-dihydroorotate from bicarbonate: step 2/3. Its function is as follows. Catalyzes the condensation of carbamoyl phosphate and aspartate to form carbamoyl aspartate and inorganic phosphate, the committed step in the de novo pyrimidine nucleotide biosynthesis pathway. In Thermococcus kodakarensis (strain ATCC BAA-918 / JCM 12380 / KOD1) (Pyrococcus kodakaraensis (strain KOD1)), this protein is Aspartate carbamoyltransferase catalytic subunit.